An 87-amino-acid chain; its full sequence is Small ribosomal subunit protein bS16 (87 aa).

The protein belongs to the bacterial ribosomal protein bS16 family.

In Ehrlichia ruminantium (strain Welgevonden), this protein is Small ribosomal subunit protein bS16.